The following is a 130-amino-acid chain: Small ribosomal subunit protein uS9 (130 aa).

The protein belongs to the universal ribosomal protein uS9 family.

In Shewanella halifaxensis (strain HAW-EB4), this protein is Small ribosomal subunit protein uS9.